The primary structure comprises 462 residues: Sensor histidine kinase RegB (462 aa).

The Cytoplasmic segment spans residues 1-25 (MILGPDGILNRDTRGDWVRLRTLIL). Residues 26–45 (LRWMAVAGQLAAIVVTDWYL) form a helical membrane-spanning segment. Residues 46-51 (GVRLPM) are Extracellular-facing. Residues 52 to 70 (GLCFMAVGASVIANVIATF) traverse the membrane as a helical segment. Over 71-78 (VFPQNRRL) the chain is Cytoplasmic. The chain crosses the membrane as a helical span at residues 79-96 (TEFQALMILLFDLTQLSF). The Extracellular segment spans residues 97–103 (LLFLTGG). Residues 104–123 (LTNPFALLILAPVTISALAL) form a helical membrane-spanning segment. Residues 124–129 (ELRTTV) lie on the Cytoplasmic side of the membrane. The chain crosses the membrane as a helical span at residues 130–149 (ILGAIAIGLLTFTAYFHLPL). Topologically, residues 150–164 (ILADGSSLSVPRMFE) are extracellular. The helical transmembrane segment at 165-182 (FGFWLAIVIGILFLGLYS) threads the bilayer. At 183 to 462 (RRVAIEIRSM…PLGENVLIQT (280 aa)) the chain is on the cytoplasmic side. Residues 218-445 (AAAHELGTPL…IVEVIWPVDR (228 aa)) form the Histidine kinase domain. His-221 carries the post-translational modification Phosphohistidine; by autocatalysis.

Its subcellular location is the cell inner membrane. It catalyses the reaction ATP + protein L-histidine = ADP + protein N-phospho-L-histidine.. Functionally, member of the two-component regulatory system RegB/RegA. Involved in the positive regulation of photosynthesis gene expression in response to anaerobiosis. Also involved in positive regulation of the cbbI and cbbII Calvin cycle CO2 fixation operons, as well as in regulation of expression of genes involved in alternative CO2 fixation pathways. Phosphorylates RegA/PrrA. This chain is Sensor histidine kinase RegB (regB), found in Cereibacter sphaeroides (strain ATCC 17023 / DSM 158 / JCM 6121 / CCUG 31486 / LMG 2827 / NBRC 12203 / NCIMB 8253 / ATH 2.4.1.) (Rhodobacter sphaeroides).